The sequence spans 657 residues: Receptor-type tyrosine-protein phosphatase R (657 aa).

The N-terminal stretch at methionine 1–cysteine 21 is a signal peptide. Topologically, residues phenylalanine 22–glycine 227 are extracellular. O-linked (Xyl...) (chondroitin sulfate) serine glycosylation occurs at serine 23. Asparagine 129 is a glycosylation site (N-linked (GlcNAc...) asparagine). Residues phenylalanine 228–leucine 248 form a helical membrane-spanning segment. Residues tyrosine 249 to glutamine 657 lie on the Cytoplasmic side of the membrane. Residue serine 272 is modified to Phosphoserine. At serine 339 the chain carries Phosphoserine; by PKA. Residues leucine 393–tyrosine 647 form the Tyrosine-protein phosphatase domain. Substrate is bound by residues aspartate 554, cysteine 588–arginine 594, and glutamine 632. Cysteine 588 acts as the Phosphocysteine intermediate in catalysis.

It belongs to the protein-tyrosine phosphatase family. Receptor class 7 subfamily. Interacts with MAPKs. Detected in cerebrospinal fluid (at protein level). Expressed in brain, placenta, small intestine, stomach, uterus and weakly in the prostate. Isoform alpha has been observed only in the brain. Isoform gamma is expressed in brain, placenta and uterus. Isoform delta is expressed in brain, kidney, placenta, prostate, small intestine and uterus.

It is found in the secreted. It localises to the cell membrane. Its subcellular location is the cytoplasm. The protein localises to the perinuclear region. It carries out the reaction O-phospho-L-tyrosyl-[protein] + H2O = L-tyrosyl-[protein] + phosphate. In terms of biological role, sequesters mitogen-activated protein kinases (MAPKs) such as MAPK1, MAPK3 and MAPK14 in the cytoplasm in an inactive form. The MAPKs bind to a dephosphorylated kinase interacting motif, phosphorylation of which by the protein kinase A complex releases the MAPKs for activation and translocation into the nucleus. In Homo sapiens (Human), this protein is Receptor-type tyrosine-protein phosphatase R (PTPRR).